A 300-amino-acid chain; its full sequence is Tyrosine recombinase XerC (300 aa).

The Core-binding (CB) domain maps to 2–88; the sequence is ENVNFTLNLF…SLRSFYKFLL (87 aa). The region spanning 109–294 is the Tyr recombinase domain; it reads KIPHFLYPDE…TKDHLRYVYL (186 aa). Active-site residues include R149, K173, H246, R249, and H272. Y281 acts as the O-(3'-phospho-DNA)-tyrosine intermediate in catalysis.

Belongs to the 'phage' integrase family. XerC subfamily. As to quaternary structure, forms a cyclic heterotetrameric complex composed of two molecules of XerC and two molecules of XerD.

Its subcellular location is the cytoplasm. Its function is as follows. Site-specific tyrosine recombinase, which acts by catalyzing the cutting and rejoining of the recombining DNA molecules. The XerC-XerD complex is essential to convert dimers of the bacterial chromosome into monomers to permit their segregation at cell division. It also contributes to the segregational stability of plasmids. This Anoxybacillus flavithermus (strain DSM 21510 / WK1) protein is Tyrosine recombinase XerC.